The following is a 158-amino-acid chain: MLLTHLNEENQPKMVDIGDKETTERIALASGRISMNKEAYDAIINHGVKKGPVLQTAIIAGIMGAKKTSELIPMCHSIMLNGVDIDILEEKETCSFKLYARVKTQAKTGVEMEALMSVSIGLLTIYDMVKAIDKSMTISGVMLEHKSGGKSGDYNAKK.

Residues 74–76 (MCH) and 112–113 (ME) contribute to the substrate site. Residue aspartate 127 is part of the active site.

This sequence belongs to the MoaC family. In terms of assembly, homohexamer; trimer of dimers.

The catalysed reaction is (8S)-3',8-cyclo-7,8-dihydroguanosine 5'-triphosphate = cyclic pyranopterin phosphate + diphosphate. It participates in cofactor biosynthesis; molybdopterin biosynthesis. Its function is as follows. Catalyzes the conversion of (8S)-3',8-cyclo-7,8-dihydroguanosine 5'-triphosphate to cyclic pyranopterin monophosphate (cPMP). This is Cyclic pyranopterin monophosphate synthase from Helicobacter pylori (strain G27).